The chain runs to 176 residues: RNA 2',3'-cyclic phosphodiesterase (176 aa).

Catalysis depends on H28, which acts as the Proton donor. Short sequence motifs (HXTX) lie at residues 28–31 (HITL) and 113–116 (HVTL). The active-site Proton acceptor is the H113.

This sequence belongs to the 2H phosphoesterase superfamily. ThpR family.

It catalyses the reaction a 3'-end 2',3'-cyclophospho-ribonucleotide-RNA + H2O = a 3'-end 2'-phospho-ribonucleotide-RNA + H(+). Functionally, hydrolyzes RNA 2',3'-cyclic phosphodiester to an RNA 2'-phosphomonoester. The sequence is that of RNA 2',3'-cyclic phosphodiesterase from Aeropyrum pernix (strain ATCC 700893 / DSM 11879 / JCM 9820 / NBRC 100138 / K1).